We begin with the raw amino-acid sequence, 433 residues long: Histidine--tRNA ligase (433 aa).

This sequence belongs to the class-II aminoacyl-tRNA synthetase family. As to quaternary structure, homodimer.

It is found in the cytoplasm. The enzyme catalyses tRNA(His) + L-histidine + ATP = L-histidyl-tRNA(His) + AMP + diphosphate + H(+). The polypeptide is Histidine--tRNA ligase (Pseudothermotoga lettingae (strain ATCC BAA-301 / DSM 14385 / NBRC 107922 / TMO) (Thermotoga lettingae)).